The following is a 744-amino-acid chain: Collagen alpha-1(VIII) chain (744 aa).

An N-terminal signal peptide occupies residues 1–27 (MAVPPGPPQLLQVLLTISLGSIRLIQA). Residues 29–117 (AYYGIKPLPP…GKEIPLASLR (89 aa)) form a nonhelical region (NC2) region. Residues 101-110 (KEAVPKKGKE) are compositionally biased toward basic and acidic residues. 2 disordered regions span residues 101-435 (KEAV…GLQG) and 478-584 (LLGP…QGEY). The interval 118–571 (GEQGPRGEPG…PGPPGPPGPP (454 aa)) is triple-helical region. Over residues 128-137 (PRGPPGPPGL) the composition is skewed to pro residues. Residues 168–190 (KPGAMGMPGAKGEIGPKGEIGPM) are compositionally biased toward low complexity. A compositionally biased stretch (gly residues) spans 203–217 (GLPGIGKPGGPGLPG). Residues 288 to 298 (KPGPPGEPGPQ) show a composition bias toward pro residues. The span at 328–337 (GFPGGKGEQG) shows a compositional bias: gly residues. Residues 389–403 (PGEPGLPGIPGPMGP) are compositionally biased toward pro residues. Gly residues predominate over residues 411–420 (GPKGEGGIVG). Low complexity-rich tracts occupy residues 478 to 506 (LLGPKGEPGIPGDQGLQGPPGIPGITGPS) and 540 to 556 (LHGPPGKPGALGPQGQP). Residues 558-579 (LPGPPGPPGPPGPPAVMPPTPA) are compositionally biased toward pro residues. Residues 572 to 744 (AVMPPTPAPQ…SFSGYLLYPM (173 aa)) form a nonhelical region (NC1) region. Residues 611–744 (PAYEMPAFTA…SFSGYLLYPM (134 aa)) form the C1q domain.

In terms of assembly, homotrimers, or heterotrimers in association with alpha 2(VIII) type collagens. Four homotrimers can form a tetrahedron stabilized by central interacting C-terminal NC1 trimers. Post-translationally, prolines at the third position of the tripeptide repeating unit (G-X-Y) are hydroxylated in some or all of the chains. In terms of processing, proteolytically cleaved by neutrophil elastase, in vitro. Proteolytic processing produces the C-terminal NC1 domain fragment, vastatin.

The protein localises to the secreted. It localises to the extracellular space. The protein resides in the extracellular matrix. Its subcellular location is the basement membrane. In terms of biological role, macromolecular component of the subendothelium. Major component of the Descemet's membrane (basement membrane) of corneal endothelial cells. Also a component of the endothelia of blood vessels. Necessary for migration and proliferation of vascular smooth muscle cells and thus, has a potential role in the maintenance of vessel wall integrity and structure, in particular in atherogenesis. Its function is as follows. Vastatin, the C-terminal fragment comprising the NC1 domain, inhibits aortic endothelial cell proliferation and causes cell apoptosis. This chain is Collagen alpha-1(VIII) chain (COL8A1), found in Oryctolagus cuniculus (Rabbit).